The following is a 394-amino-acid chain: Putative 8-amino-7-oxononanoate synthase (394 aa).

Arg21 lines the substrate pocket. A pyridoxal 5'-phosphate-binding site is contributed by 107–108; that stretch reads GY. His132 serves as a coordination point for substrate. Pyridoxal 5'-phosphate-binding positions include Ser180, 205-208, and 236-239; these read DEAH and TLSK. At Lys239 the chain carries N6-(pyridoxal phosphate)lysine. Thr361 serves as a coordination point for substrate.

This sequence belongs to the class-II pyridoxal-phosphate-dependent aminotransferase family. BioF subfamily. As to quaternary structure, homodimer. It depends on pyridoxal 5'-phosphate as a cofactor.

The catalysed reaction is 6-carboxyhexanoyl-[ACP] + L-alanine + H(+) = (8S)-8-amino-7-oxononanoate + holo-[ACP] + CO2. The protein operates within cofactor biosynthesis; biotin biosynthesis. Catalyzes the decarboxylative condensation of pimeloyl-[acyl-carrier protein] and L-alanine to produce 8-amino-7-oxononanoate (AON), [acyl-carrier protein], and carbon dioxide. This is Putative 8-amino-7-oxononanoate synthase (bioF) from Acaryochloris marina (strain MBIC 11017).